Here is a 568-residue protein sequence, read N- to C-terminus: 2-succinyl-5-enolpyruvyl-6-hydroxy-3-cyclohexene-1-carboxylate synthase (568 aa).

It belongs to the TPP enzyme family. MenD subfamily. As to quaternary structure, homodimer. Requires Mg(2+) as cofactor. Mn(2+) serves as cofactor. The cofactor is thiamine diphosphate.

The enzyme catalyses isochorismate + 2-oxoglutarate + H(+) = 5-enolpyruvoyl-6-hydroxy-2-succinyl-cyclohex-3-ene-1-carboxylate + CO2. It participates in quinol/quinone metabolism; 1,4-dihydroxy-2-naphthoate biosynthesis; 1,4-dihydroxy-2-naphthoate from chorismate: step 2/7. The protein operates within quinol/quinone metabolism; menaquinone biosynthesis. Catalyzes the thiamine diphosphate-dependent decarboxylation of 2-oxoglutarate and the subsequent addition of the resulting succinic semialdehyde-thiamine pyrophosphate anion to isochorismate to yield 2-succinyl-5-enolpyruvyl-6-hydroxy-3-cyclohexene-1-carboxylate (SEPHCHC). This chain is 2-succinyl-5-enolpyruvyl-6-hydroxy-3-cyclohexene-1-carboxylate synthase, found in Pasteurella multocida (strain Pm70).